A 353-amino-acid chain; its full sequence is Heterogeneous nuclear ribonucleoproteins A2/B1 (353 aa).

M1 is subject to N-acetylmethionine. T4 carries the post-translational modification Phosphothreonine. The Nuclear localization signal motif lies at 9 to 15; that stretch reads PLERKKR. RRM domains are found at residues 21–104 and 112–191; these read RKLF…ESGK and KKLF…LSRQ. Residue K22 forms a Glycyl lysine isopeptide (Lys-Gly) (interchain with G-Cter in SUMO2) linkage. S29 carries the phosphoserine modification. R38 bears the Omega-N-methylarginine mark. The residue at position 85 (S85) is a Phosphoserine. Residue K104 is modified to N6,N6-dimethyllysine; alternate. A Glycyl lysine isopeptide (Lys-Gly) (interchain with G-Cter in SUMO2); alternate cross-link involves residue K104. Residues K112, K120, and K137 each participate in a glycyl lysine isopeptide (Lys-Gly) (interchain with G-Cter in SUMO2) cross-link. At T140 the chain carries Phosphothreonine. S149 is modified (phosphoserine). Residue K152 forms a Glycyl lysine isopeptide (Lys-Gly) (interchain with G-Cter in SUMO2) linkage. T159 is modified (phosphothreonine). Residues K168 and K173 each participate in a glycyl lysine isopeptide (Lys-Gly) (interchain with G-Cter in SUMO2); alternate cross-link. N6-acetyllysine; alternate is present on residues K168 and K173. T176 is subject to Phosphothreonine. Residue K186 forms a Glycyl lysine isopeptide (Lys-Gly) (interchain with G-Cter in SUMO2) linkage. Residues S189 and S201 each carry the phosphoserine modification. The segment at 193–353 is disordered; sequence MQEVQSSRSG…SGGYGGRSRY (161 aa). Gly residues predominate over residues 202 to 223; it reads GRGGNFGFGDSRGGGGNFGPGP. The residue at position 203 (R203) is an Asymmetric dimethylarginine; alternate. Residue R203 is modified to Dimethylated arginine; alternate. Omega-N-methylarginine; alternate is present on R203. Position 212 is a phosphoserine (S212). R213 is subject to Asymmetric dimethylarginine; alternate. R213 is modified (dimethylated arginine; alternate). Residue R213 is modified to Omega-N-methylarginine; alternate. A Phosphoserine modification is found at S225. R228 carries the post-translational modification Omega-N-methylarginine. Residues S231 and S236 each carry the phosphoserine modification. R238 bears the Omega-N-methylarginine mark. S259 carries the post-translational modification Phosphoserine. Asymmetric dimethylarginine; alternate is present on R266. Omega-N-methylarginine; alternate is present on R266. Residues 308–347 are nuclear targeting sequence; that stretch reads QQPSNYGPMKSGNFGGSRNMGGPYGGGNYGPGGSGGSGGY. Residues 320-353 are compositionally biased toward gly residues; that stretch reads NFGGSRNMGGPYGGGNYGPGGSGGSGGYGGRSRY. A Phosphoserine modification is found at S324. The residue at position 325 (R325) is an Omega-N-methylarginine. Residue Y331 is modified to Phosphotyrosine. Phosphoserine occurs at positions 341 and 344. Y347 is subject to Phosphotyrosine. R350 is modified (omega-N-methylarginine).

Identified in the spliceosome C complex. Identified in a IGF2BP1-dependent mRNP granule complex containing untranslated mRNAs. Interacts with IGF2BP1. Interacts with C9orf72. Interacts with DGCR8. Interacts with TARDBP. Interacts with CKAP5. Interacts with PPIA/CYPA. Interacts (via C-terminus) with FAM76B; the interaction results in retention of HNRNPA2B1 in the nucleus and inhibition of the NF-kappa-B-mediated inflammatory pathway. Interacts with NF-kappa-B inhibitors NFKBIA and NFKBIE; the interaction may be mediated by the RRM2 domain of HNRNPA2B1, and HNRNPA2B1 may interact simultaneously with FAM76B and either NFKBIA or NFKBIE to form a complex. Post-translationally, sumoylated in exosomes, promoting miRNAs-binding. In terms of processing, asymmetric dimethylation at Arg-266 constitutes the major methylation site. According to a report, methylation affects subcellular location and promotes nuclear localization. According to another report, methylation at Arg-266 does not influence nucleocytoplasmic shuttling.

It localises to the nucleus. The protein resides in the nucleoplasm. It is found in the cytoplasmic granule. Its subcellular location is the secreted. The protein localises to the extracellular exosome. Functionally, heterogeneous nuclear ribonucleoprotein (hnRNP) that associates with nascent pre-mRNAs, packaging them into hnRNP particles. The hnRNP particle arrangement on nascent hnRNA is non-random and sequence-dependent and serves to condense and stabilize the transcripts and minimize tangling and knotting. Packaging plays a role in various processes such as transcription, pre-mRNA processing, RNA nuclear export, subcellular location, mRNA translation and stability of mature mRNAs. Forms hnRNP particles with at least 20 other different hnRNP and heterogeneous nuclear RNA in the nucleus. Involved in transport of specific mRNAs to the cytoplasm in oligodendrocytes and neurons: acts by specifically recognizing and binding the A2RE (21 nucleotide hnRNP A2 response element) or the A2RE11 (derivative 11 nucleotide oligonucleotide) sequence motifs present on some mRNAs, and promotes their transport to the cytoplasm. Specifically binds single-stranded telomeric DNA sequences, protecting telomeric DNA repeat against endonuclease digestion. Also binds other RNA molecules, such as primary miRNA (pri-miRNAs): acts as a nuclear 'reader' of the N6-methyladenosine (m6A) mark by specifically recognizing and binding a subset of nuclear m6A-containing pri-miRNAs. Binding to m6A-containing pri-miRNAs promotes pri-miRNA processing by enhancing binding of DGCR8 to pri-miRNA transcripts. Involved in miRNA sorting into exosomes following sumoylation, possibly by binding (m6A)-containing pre-miRNAs. Acts as a regulator of efficiency of mRNA splicing, possibly by binding to m6A-containing pre-mRNAs. Plays a role in the splicing of pyruvate kinase PKM by binding repressively to sequences flanking PKM exon 9, inhibiting exon 9 inclusion and resulting in exon 10 inclusion and production of the PKM M2 isoform. In Pongo abelii (Sumatran orangutan), this protein is Heterogeneous nuclear ribonucleoproteins A2/B1 (HNRNPA2B1).